The following is a 32-amino-acid chain: Delta-conotoxin-like CnVIC (32 aa).

Cystine bridges form between C3–C18, C10–C22, and C17–C27. Residues P6 and P14 each carry the 4-hydroxyproline modification.

Belongs to the conotoxin O1 superfamily. In terms of tissue distribution, expressed by the venom duct.

It localises to the secreted. Its function is as follows. Delta-conotoxins bind to site 6 of voltage-gated sodium channels (Nav) and inhibit the inactivation process. This toxin acts on Nav1.2/SCN2A, Nav1.4/SCN4A, Nav1.5/SCN5A (weak activity), Nav1.6/SCN8A (EC(50)=2.5 uM). The polypeptide is Delta-conotoxin-like CnVIC (Conus consors (Singed cone)).